A 159-amino-acid polypeptide reads, in one-letter code: MRCPFCRHEDTQVVDSRVSEDGAAIRRRRRCSACDKRFTTYERVELNLPAVVKKDGSRTEFDRRKIVASMQLALRKRPVAADAIDAAVARIEYQLLATGEREVRSEKLGELVMNELRGLDTIAYVRFASVYRRFEDVSEFADVIEEFRRASPAKPPRKR.

A zinc finger lies at 3-34 (CPFCRHEDTQVVDSRVSEDGAAIRRRRRCSAC). In terms of domain architecture, ATP-cone spans 49-139 (PAVVKKDGSR…VYRRFEDVSE (91 aa)).

It belongs to the NrdR family. Zn(2+) serves as cofactor.

Functionally, negatively regulates transcription of bacterial ribonucleotide reductase nrd genes and operons by binding to NrdR-boxes. The protein is Transcriptional repressor NrdR of Burkholderia multivorans (strain ATCC 17616 / 249).